A 296-amino-acid polypeptide reads, in one-letter code: Pyridoxine/pyridoxal/pyridoxamine kinase (296 aa).

The substrate site is built by Ser23 and His59. Asp125 provides a ligand contact to ATP. Tyr136 is a binding site for Mg(2+). ATP is bound by residues Thr157, Glu162, Thr195, 222 to 225 (HQRV), and Thr232. A Mg(2+)-binding site is contributed by Glu162. Asp234 provides a ligand contact to substrate.

Belongs to the pyridoxine kinase family. PdxK subfamily. In terms of assembly, homodimer. Requires Mg(2+) as cofactor.

The catalysed reaction is pyridoxal + ATP = pyridoxal 5'-phosphate + ADP + H(+). It catalyses the reaction pyridoxine + ATP = pyridoxine 5'-phosphate + ADP + H(+). The enzyme catalyses pyridoxamine + ATP = pyridoxamine 5'-phosphate + ADP + H(+). Its pathway is cofactor metabolism; pyridoxal 5'-phosphate salvage; pyridoxal 5'-phosphate from pyridoxal: step 1/1. It participates in cofactor metabolism; pyridoxal 5'-phosphate salvage; pyridoxine 5'-phosphate from pyridoxine: step 1/1. The protein operates within cofactor metabolism; pyridoxal 5'-phosphate salvage; pyridoxamine 5'-phosphate from pyridoxamine: step 1/1. Its function is as follows. B6-vitamer kinase involved in the salvage pathway of pyridoxal 5'-phosphate (PLP). Catalyzes the phosphorylation of pyridoxine (PN), pyridoxal (PL), and pyridoxamine (PM), forming their respective 5'-phosphorylated esters, i.e. PNP, PLP and PMP. This Bordetella avium (strain 197N) protein is Pyridoxine/pyridoxal/pyridoxamine kinase.